Here is a 687-residue protein sequence, read N- to C-terminus: Putative lipase YDR444W (687 aa).

The active-site Charge relay system is S284. Disordered regions lie at residues 429–472 (IRKK…AESP), 491–513 (KINK…EQGV), and 650–687 (ELAE…ENAT). The span at 436-463 (SPTSSEFVSSDSPESSGASSPSNENGNN) shows a compositional bias: low complexity. Residues 670–681 (RSNEYNEGEISK) show a composition bias toward basic and acidic residues.

The protein belongs to the putative lipase ROG1 family.

The protein localises to the cytoplasm. The sequence is that of Putative lipase YDR444W from Saccharomyces cerevisiae (strain ATCC 204508 / S288c) (Baker's yeast).